Here is a 302-residue protein sequence, read N- to C-terminus: ATP synthase subunit b 1 (302 aa).

A helical transmembrane segment spans residues 5-22 (WFTVIAQGINFLLLLWLL). Positions 278 to 302 (GLPENEGTDNPEANPPHAEAKIPHA) are disordered.

This sequence belongs to the ATPase B chain family. F-type ATPases have 2 components, F(1) - the catalytic core - and F(0) - the membrane proton channel. F(1) has five subunits: alpha(3), beta(3), gamma(1), delta(1), epsilon(1). F(0) has three main subunits: a(1), b(2) and c(10-14). The alpha and beta chains form an alternating ring which encloses part of the gamma chain. F(1) is attached to F(0) by a central stalk formed by the gamma and epsilon chains, while a peripheral stalk is formed by the delta and b chains.

The protein localises to the cell inner membrane. F(1)F(0) ATP synthase produces ATP from ADP in the presence of a proton or sodium gradient. F-type ATPases consist of two structural domains, F(1) containing the extramembraneous catalytic core and F(0) containing the membrane proton channel, linked together by a central stalk and a peripheral stalk. During catalysis, ATP synthesis in the catalytic domain of F(1) is coupled via a rotary mechanism of the central stalk subunits to proton translocation. Functionally, component of the F(0) channel, it forms part of the peripheral stalk, linking F(1) to F(0). This Pseudoalteromonas atlantica (strain T6c / ATCC BAA-1087) protein is ATP synthase subunit b 1.